Consider the following 118-residue polypeptide: Ribonuclease P protein component (118 aa).

Belongs to the RnpA family. As to quaternary structure, consists of a catalytic RNA component (M1 or rnpB) and a protein subunit.

It catalyses the reaction Endonucleolytic cleavage of RNA, removing 5'-extranucleotides from tRNA precursor.. Functionally, RNaseP catalyzes the removal of the 5'-leader sequence from pre-tRNA to produce the mature 5'-terminus. It can also cleave other RNA substrates such as 4.5S RNA. The protein component plays an auxiliary but essential role in vivo by binding to the 5'-leader sequence and broadening the substrate specificity of the ribozyme. The polypeptide is Ribonuclease P protein component (Petrotoga mobilis (strain DSM 10674 / SJ95)).